The primary structure comprises 108 residues: MIPGEIITPSGAIEINVGRDTLRISVANTGDRPIQVGSHYHFYEVNQALEFQRELTKGTHLNIPAGTSVRFEPGDTKEVELVTIAGTEEIYGFNGLINGSLKGKKKKK.

It belongs to the urease beta subunit family. In terms of assembly, heterotrimer of UreA (gamma), UreB (beta) and UreC (alpha) subunits. Three heterotrimers associate to form the active enzyme.

It is found in the cytoplasm. It catalyses the reaction urea + 2 H2O + H(+) = hydrogencarbonate + 2 NH4(+). The protein operates within nitrogen metabolism; urea degradation; CO(2) and NH(3) from urea (urease route): step 1/1. The protein is Urease subunit beta of Microcystis aeruginosa (strain NIES-843 / IAM M-2473).